We begin with the raw amino-acid sequence, 839 residues long: uncharacterized protein (839 aa).

This is an uncharacterized protein from Mycoplasma pneumoniae (strain ATCC 29342 / M129 / Subtype 1) (Mycoplasmoides pneumoniae).